A 555-amino-acid chain; its full sequence is MSTDFDRIYYNQSKLGGRFRLAEGGLGWKASATGGSASTQNNEPLLLAADEVSSVQWSRGCRGYELKISTKNKGLIQMDGFQQEDFNLLKNDFQRRFNMQLEHREHSLRGWNWGKLDLARNEMVFSLNGKPTFEIPYTHINNTNLTAKNEIALEFDTQNEAYNPAGDELVEMRLYVPGTVEENEDQDQIMVKDEAEAEDGVKSEVKTEEGSEEPDVQEEKTLAEYFYEELRSKADIGEISGDAIISFQDLFFTTPRGRYDIDIYKNSIRLRGKTYEYKLQHRQINRIFSLPKADDIHYLMVLSIDPPIRQGQTSYPFLVLQFQKDEETEVQLNVEDDEFEKLYKDKLKKQYDAKTHIVLSHVLKGLTGRRVIVPGEYKSKYDQCAVSCSYKVNEGHLYPLDNAFLFLTKPTLYIPFQDIAAVNISRAGQTSTSARTFDLEVVMRANRGTTTFANISKEEQQLLETFLRSKNLRVKNEDKEAEQRLQTAFGSDSDDDDVDINMGSAGEDEESVDEDFHASDEDDDVAEEFDSEASASDSEGETSKSERPSKKAKLE.

Positions 194–209 (EAEAEDGVKSEVKTEE) are enriched in basic and acidic residues. Disordered regions lie at residues 194-217 (EAEA…PDVQ) and 476-555 (NEDK…AKLE). Positions 520-531 (DEDDDVAEEFDS) are enriched in acidic residues. Basic and acidic residues predominate over residues 541–555 (ETSKSERPSKKAKLE).

The protein belongs to the SSRP1 family. In terms of assembly, forms a stable heterodimer with SPT16. The SPT16-POB3 dimer weakly associates with multiple molecules of NHP6 to form the FACT complex.

The protein resides in the nucleus. The protein localises to the chromosome. Functionally, component of the FACT complex, a general chromatin factor that acts to reorganize nucleosomes. The FACT complex is involved in multiple processes that require DNA as a template such as mRNA elongation, DNA replication and DNA repair. During transcription elongation the FACT complex acts as a histone chaperone that both destabilizes and restores nucleosomal structure. It facilitates the passage of RNA polymerase II and transcription by promoting the dissociation of one histone H2A-H2B dimer from the nucleosome, then subsequently promotes the reestablishment of the nucleosome following the passage of RNA polymerase II. The chain is FACT complex subunit POB3 (POB3) from Kluyveromyces lactis (strain ATCC 8585 / CBS 2359 / DSM 70799 / NBRC 1267 / NRRL Y-1140 / WM37) (Yeast).